Consider the following 390-residue polypeptide: Chorismate synthase 2 (390 aa).

NADP(+) contacts are provided by arginine 39 and arginine 45. Residues 132–134, 253–254, glycine 298, 313–317, and arginine 339 contribute to the FMN site; these read RSS, NA, and KPIPT.

This sequence belongs to the chorismate synthase family. Homotetramer. The cofactor is FMNH2.

The enzyme catalyses 5-O-(1-carboxyvinyl)-3-phosphoshikimate = chorismate + phosphate. The protein operates within metabolic intermediate biosynthesis; chorismate biosynthesis; chorismate from D-erythrose 4-phosphate and phosphoenolpyruvate: step 7/7. Catalyzes the anti-1,4-elimination of the C-3 phosphate and the C-6 proR hydrogen from 5-enolpyruvylshikimate-3-phosphate (EPSP) to yield chorismate, which is the branch point compound that serves as the starting substrate for the three terminal pathways of aromatic amino acid biosynthesis. This reaction introduces a second double bond into the aromatic ring system. In Bacillus thuringiensis (strain Al Hakam), this protein is Chorismate synthase 2.